The primary structure comprises 115 residues: NADH-ubiquinone oxidoreductase chain 3 (115 aa).

Transmembrane regions (helical) follow at residues 4–24 (LMAL…AFWL), 55–75 (FFLV…LLPL), and 86–106 (TMML…AYEW).

Belongs to the complex I subunit 3 family. In terms of assembly, core subunit of respiratory chain NADH dehydrogenase (Complex I) which is composed of 45 different subunits. Interacts with TMEM186. Interacts with TMEM242.

It is found in the mitochondrion inner membrane. It carries out the reaction a ubiquinone + NADH + 5 H(+)(in) = a ubiquinol + NAD(+) + 4 H(+)(out). Its function is as follows. Core subunit of the mitochondrial membrane respiratory chain NADH dehydrogenase (Complex I) which catalyzes electron transfer from NADH through the respiratory chain, using ubiquinone as an electron acceptor. Essential for the catalytic activity of complex I. This Peromyscus gossypinus (Cotton deermouse) protein is NADH-ubiquinone oxidoreductase chain 3.